The primary structure comprises 173 residues: Large ribosomal subunit protein uL15 (173 aa).

Residues 1–11 (MKLNEIRDNQG) are compositionally biased toward basic and acidic residues. The tract at residues 1-50 (MKLNEIRDNQGARKSRVRVGRGIGSGLGKTGGRGQKGQKSRSGVSINGFE) is disordered. Residues 21–35 (RGIGSGLGKTGGRGQ) are compositionally biased toward gly residues.

Belongs to the universal ribosomal protein uL15 family. As to quaternary structure, part of the 50S ribosomal subunit.

Functionally, binds to the 23S rRNA. This Rhizorhabdus wittichii (strain DSM 6014 / CCUG 31198 / JCM 15750 / NBRC 105917 / EY 4224 / RW1) (Sphingomonas wittichii) protein is Large ribosomal subunit protein uL15.